Here is a 352-residue protein sequence, read N- to C-terminus: RNA 3'-terminal phosphate cyclase (352 aa).

ATP is bound by residues glutamine 102 and 292-296 (HMGDQ). The Tele-AMP-histidine intermediate role is filled by histidine 318.

The protein belongs to the RNA 3'-terminal cyclase family. Type 1 subfamily.

It localises to the cytoplasm. It carries out the reaction a 3'-end 3'-phospho-ribonucleotide-RNA + ATP = a 3'-end 2',3'-cyclophospho-ribonucleotide-RNA + AMP + diphosphate. Catalyzes the conversion of 3'-phosphate to a 2',3'-cyclic phosphodiester at the end of RNA. The mechanism of action of the enzyme occurs in 3 steps: (A) adenylation of the enzyme by ATP; (B) transfer of adenylate to an RNA-N3'P to produce RNA-N3'PP5'A; (C) and attack of the adjacent 2'-hydroxyl on the 3'-phosphorus in the diester linkage to produce the cyclic end product. The biological role of this enzyme is unknown but it is likely to function in some aspects of cellular RNA processing. The protein is RNA 3'-terminal phosphate cyclase of Methanopyrus kandleri (strain AV19 / DSM 6324 / JCM 9639 / NBRC 100938).